A 310-amino-acid polypeptide reads, in one-letter code: Ceramide synthase LOH1 (310 aa).

6 consecutive transmembrane segments (helical) span residues 16 to 36 (SFPT…FPTI), 85 to 105 (CIYY…EPWF), 131 to 151 (FLYM…VFWE), 157 to 177 (FGVS…SYIC), 216 to 236 (FVLF…FWIL), and 260 to 280 (YMFN…WVLI). One can recognise a TLC domain in the interval 76-289 (RKFKESAWKC…IYRMLVKQVQ (214 aa)). 2 positions are modified to phosphoserine: Ser300 and Ser302.

In terms of tissue distribution, expressed ubiquitously at high levels. Not observed in pollen.

The protein localises to the endoplasmic reticulum membrane. It catalyses the reaction (4R)-hydroxysphinganine + a fatty acyl-CoA = an N-acyl-(4R)-4-hydroxysphinganine + CoA + H(+). The enzyme catalyses hexacosanoyl-CoA + (4R)-hydroxysphinganine = N-hexacosanoyl-(4R)-hydroxysphinganine + CoA + H(+). It carries out the reaction tetracosanoyl-CoA + (4R)-hydroxysphinganine = N-tetracosanoyl-(4R)-hydroxysphinganine + CoA + H(+). It functions in the pathway sphingolipid metabolism. Its activity is regulated as follows. Inhibited by the mycotoxin fumonisin B(1), a sphingosine analog mycotoxins produced by pathogenic fungi. Repressed by divalent cation such as magnesium Mg(2+), copper Cu(2+), zinc Zn(2+), manganese Mn(2+), calcium Ca(2+) and cobalt Co(2+). Functionally, essential for plant growth, promotes cell division in root meristems. Catalyzes the biosynthesis of ceramide sphingolipids with C(16) to C(28) fatty acids, structural membrane lipids involved in membrane trafficking (e.g. early endosomes) and cell polarity (e.g. polar auxin transport related proteins); mostly active with t18:0 and saturated very long saturated fatty acids (C24:0 and C26:0), such as long-chain base (LCB) phytosphingosine (t18:0), lignoceroyl- and hexacosanoyl-CoAs. Mediates resistance to sphinganine-analog mycotoxins (SAMs, e.g. fumonisin B(1)) by restoring the sphingolipid biosynthesis. Could salvage the transport of GPI-anchored proteins from the endoplasmic reticulum to the Golgi apparatus in ceramides-depleted cells after SAM exposure. May prevent precocious cell death by delaying PR1 accumulation during aging. Contributes to hypoxic conditions tolerance (e.g. submergences), especially in the dark, by promoting the formation of very-long-chain (VLC) ceramide species (22:1, 24:1 and 26:1) and of VLC unsaturated ceramides, which are modulating CTR1-mediated ethylene signaling leading to endoplasmic reticulum (ER)-to-nucleus translocation of EIN2 and EIN3. The protein is Ceramide synthase LOH1 of Arabidopsis thaliana (Mouse-ear cress).